The chain runs to 356 residues: Tyrosine recombinase XerS (356 aa).

The region spanning 16–121 is the Core-binding (CB) domain; the sequence is IMPWYVLDYY…ALSSLYKYLT (106 aa). One can recognise a Tyr recombinase domain in the interval 169 to 354; sequence AFLDYVDKEY…VNDEQKTALD (186 aa). Active-site residues include Arg-210, Lys-234, His-306, Arg-309, and His-332. The O-(3'-phospho-DNA)-tyrosine intermediate role is filled by Tyr-341.

The protein belongs to the 'phage' integrase family. XerS subfamily.

It is found in the cytoplasm. Its activity is regulated as follows. FtsK is required for recombination. Its function is as follows. Site-specific tyrosine recombinase, which acts by catalyzing the cutting and rejoining of the recombining DNA molecules. Essential to convert dimers of the bacterial chromosome into monomers to permit their segregation at cell division. In Streptococcus pyogenes serotype M12 (strain MGAS9429), this protein is Tyrosine recombinase XerS.